The primary structure comprises 289 residues: MSKIPLAVRIGLGRLNVTNLLRSRAMTQYHSKPVSEHGHIDWDQDEHAVWHELITRQQEVVKTRACQAYLDGLNMLNLPTDRLPQLPEINRVLQRETGWQVEPVPALISFDRFFALLADKKFPVATFLRRREEFDYLQEPDFFHEVYGHCAMLTHPDFAAFTHVYGQLGAKATPKERSYLARLYWFTVEFGLVQEQGQTKIYGGGILSSPGETLYASESTIPKREPFDIMQVLRTPYRIDIMQPIYYVLPDLSQLYQLSQRDVMALVWQAMQDGLLPPLFQPKEQQHAG.

H144, H149, and E189 together coordinate Fe cation.

This sequence belongs to the biopterin-dependent aromatic amino acid hydroxylase family. The cofactor is Fe(2+).

It catalyses the reaction (6R)-L-erythro-5,6,7,8-tetrahydrobiopterin + L-phenylalanine + O2 = (4aS,6R)-4a-hydroxy-L-erythro-5,6,7,8-tetrahydrobiopterin + L-tyrosine. It functions in the pathway amino-acid degradation; L-phenylalanine degradation; acetoacetate and fumarate from L-phenylalanine: step 1/6. The polypeptide is Phenylalanine-4-hydroxylase (phhA) (Vibrio cholerae serotype O1 (strain ATCC 39315 / El Tor Inaba N16961)).